We begin with the raw amino-acid sequence, 48 residues long: Large ribosomal subunit protein bL34c (48 aa).

The tract at residues 18–48 (SGFRSRMATPQGRKTIRNRRKKGRKNLTLRR) is disordered. A compositionally biased stretch (basic residues) spans 31–48 (KTIRNRRKKGRKNLTLRR).

The protein belongs to the bacterial ribosomal protein bL34 family.

It localises to the plastid. It is found in the chloroplast. The protein is Large ribosomal subunit protein bL34c of Phaeodactylum tricornutum (strain CCAP 1055/1).